A 207-amino-acid polypeptide reads, in one-letter code: Ribosomal RNA large subunit methyltransferase E (207 aa).

Gly56, Trp58, Asp76, Asp94, and Asp116 together coordinate S-adenosyl-L-methionine. Residue Lys156 is the Proton acceptor of the active site.

The protein belongs to the class I-like SAM-binding methyltransferase superfamily. RNA methyltransferase RlmE family.

It is found in the cytoplasm. It carries out the reaction uridine(2552) in 23S rRNA + S-adenosyl-L-methionine = 2'-O-methyluridine(2552) in 23S rRNA + S-adenosyl-L-homocysteine + H(+). Its function is as follows. Specifically methylates the uridine in position 2552 of 23S rRNA at the 2'-O position of the ribose in the fully assembled 50S ribosomal subunit. This Desulfatibacillum aliphaticivorans protein is Ribosomal RNA large subunit methyltransferase E.